Reading from the N-terminus, the 358-residue chain is Probable G-protein coupled receptor 25 (358 aa).

The Extracellular portion of the chain corresponds to 1–43; the sequence is MQSTEPWSPSWGTLSWDYSGSGSLDQVELCPAWNLPYGHAIIP. Residues 44-64 form a helical membrane-spanning segment; that stretch reads ALYLAAFAVGLPGNAFVVWLL. At 65–76 the chain is on the cytoplasmic side; the sequence is SRQRGPRRLVDT. The chain crosses the membrane as a helical span at residues 77–97; sequence FVLHLAAADLGFVLTLPLWAA. Over 98–113 the chain is Extracellular; that stretch reads AEARGGLWPFGDGLCK. Cys-112 and Cys-191 are joined by a disulfide. Residues 114 to 134 traverse the membrane as a helical segment; that stretch reads VSSFALAVTRCAGALLLAGMS. Residues 135-155 are Cytoplasmic-facing; it reads VDRYLAVGRPLSARPLRSARC. A helical transmembrane segment spans residues 156 to 176; sequence VRAVCGAAWAAAFLAGLPALL. The Extracellular segment spans residues 177–200; it reads YRGLQPSLDGVGSQCAEEPWEALQ. A helical transmembrane segment spans residues 201 to 221; that stretch reads GVGLLLLLLTFALPLAVTLIC. Residues 222-239 are Cytoplasmic-facing; it reads YWRVSRRLPRVGRARSNS. A helical membrane pass occupies residues 240–260; it reads LRIIFTVESVFVGCWLPFGVL. The Extracellular segment spans residues 261–284; that stretch reads RSLFHLARLQALPLPCSLLLALRW. Residues 285 to 307 form a helical membrane-spanning segment; that stretch reads GLTVTTCLAFVNSSANPVIYLLL. Residues 308–358 lie on the Cytoplasmic side of the membrane; sequence DRSFRARARFGLCARAGRQVRRISSASSLSRDDSSVFRGRSPKVNSASATW. The tract at residues 339 to 358 is disordered; that stretch reads DDSSVFRGRSPKVNSASATW.

This sequence belongs to the G-protein coupled receptor 1 family.

It localises to the membrane. In terms of biological role, orphan receptor. The chain is Probable G-protein coupled receptor 25 (Gpr25) from Mus musculus (Mouse).